Reading from the N-terminus, the 214-residue chain is Putative pyrophosphatase PpaX (214 aa).

The active-site Nucleophile is the D8.

This sequence belongs to the HAD-like hydrolase superfamily. PpaX family. It depends on Mg(2+) as a cofactor.

It catalyses the reaction diphosphate + H2O = 2 phosphate + H(+). This chain is Putative pyrophosphatase PpaX, found in Clostridium perfringens (strain 13 / Type A).